We begin with the raw amino-acid sequence, 173 residues long: MTYFVVFLGLCFVLGGLAVASNPSPYYGVVGLVLASVAGCGWLLSLGVSFVSLVLFMVYLGGMLVVFVYSVSLAADPFPEAWGDWGVVGYGMSFIVVLVVGVVVGGFVEGWDFGVVTVDSAGVFFARLDFSGVAMFYSCGVGMFLVAGWGLLLTLFVVLELVRGLSRGAIRAV.

The next 6 membrane-spanning stretches (helical) occupy residues 1–21, 27–47, 48–68, 87–107, 113–133, and 139–159; these read MTYF…AVAS, YGVV…LSLG, VSFV…VVFV, VVGY…VGGF, FGVV…FSGV, and CGVG…FVVL.

It belongs to the complex I subunit 6 family.

The protein localises to the mitochondrion membrane. It catalyses the reaction a ubiquinone + NADH + 5 H(+)(in) = a ubiquinol + NAD(+) + 4 H(+)(out). Functionally, core subunit of the mitochondrial membrane respiratory chain NADH dehydrogenase (Complex I) that is believed to belong to the minimal assembly required for catalysis. Complex I functions in the transfer of electrons from NADH to the respiratory chain. The immediate electron acceptor for the enzyme is believed to be ubiquinone. The sequence is that of NADH-ubiquinone oxidoreductase chain 6 (MT-ND6) from Cepphus grylle (Black guillemot).